Here is a 527-residue protein sequence, read N- to C-terminus: Peptide chain release factor 3 (527 aa).

Residues 9 to 277 (AKRRTFAIIS…AVVDWAPRPL (269 aa)) enclose the tr-type G domain. GTP-binding positions include 18–25 (SHPDAGKT), 86–90 (DTPGH), and 140–143 (NKLD).

The protein belongs to the TRAFAC class translation factor GTPase superfamily. Classic translation factor GTPase family. PrfC subfamily.

Its subcellular location is the cytoplasm. In terms of biological role, increases the formation of ribosomal termination complexes and stimulates activities of RF-1 and RF-2. It binds guanine nucleotides and has strong preference for UGA stop codons. It may interact directly with the ribosome. The stimulation of RF-1 and RF-2 is significantly reduced by GTP and GDP, but not by GMP. This Pseudomonas putida (strain ATCC 47054 / DSM 6125 / CFBP 8728 / NCIMB 11950 / KT2440) protein is Peptide chain release factor 3.